A 131-amino-acid chain; its full sequence is Small ribosomal subunit protein uS8 (131 aa).

The protein belongs to the universal ribosomal protein uS8 family. Part of the 30S ribosomal subunit. Contacts proteins S5 and S12.

Functionally, one of the primary rRNA binding proteins, it binds directly to 16S rRNA central domain where it helps coordinate assembly of the platform of the 30S subunit. The chain is Small ribosomal subunit protein uS8 from Prosthecochloris aestuarii (strain DSM 271 / SK 413).